Here is a 436-residue protein sequence, read N- to C-terminus: Histone acetyltransferase type B subunit 2 (436 aa).

The span at methionine 1–arginine 19 shows a compositional bias: acidic residues. Residues methionine 1–glutamate 22 are disordered. WD repeat units follow at residues aspartate 136–threonine 176, glycine 187–lysine 227, histidine 237–alanine 277, glutamine 284–histidine 324, and cysteine 328–threonine 368. The segment at aspartate 370–aspartate 374 is interaction with the histone H4 N-terminus. The stretch at glycine 385 to aspartate 425 is one WD 6 repeat.

It belongs to the WD repeat RBAP46/RBAP48/MSI1 family. In terms of assembly, component of the HAT-B complex composed of at least hat1 and hat2. The HAT-B complex binds to histone H4 tail.

The protein localises to the cytoplasm. It is found in the nucleus. Its function is as follows. Regulatory subunit of the histone acetylase B (HAT-B) complex. The complex acetylates 'Lys-12' of histone H4 which is required for telomeric silencing. The chain is Histone acetyltransferase type B subunit 2 (hat2) from Aspergillus oryzae (strain ATCC 42149 / RIB 40) (Yellow koji mold).